Consider the following 184-residue polypeptide: Holliday junction branch migration complex subunit RuvA (184 aa).

The domain I stretch occupies residues 1-64; it reads MIVAVEGIIT…EDADLLYGFL (64 aa). The tract at residues 65–145 is domain II; that stretch reads DEKEKRMFEM…ANDGEQYKIE (81 aa). Position 145 (glutamate 145) is a region of interest, flexible linker. The interval 145 to 184 is domain III; sequence ETISALENLGFKRDKINKILLNCKSTNTADLIKEALKKLA.

Belongs to the RuvA family. In terms of assembly, homotetramer. Forms an RuvA(8)-RuvB(12)-Holliday junction (HJ) complex. HJ DNA is sandwiched between 2 RuvA tetramers; dsDNA enters through RuvA and exits via RuvB. An RuvB hexamer assembles on each DNA strand where it exits the tetramer. Each RuvB hexamer is contacted by two RuvA subunits (via domain III) on 2 adjacent RuvB subunits; this complex drives branch migration. In the full resolvosome a probable DNA-RuvA(4)-RuvB(12)-RuvC(2) complex forms which resolves the HJ.

It localises to the cytoplasm. Functionally, the RuvA-RuvB-RuvC complex processes Holliday junction (HJ) DNA during genetic recombination and DNA repair, while the RuvA-RuvB complex plays an important role in the rescue of blocked DNA replication forks via replication fork reversal (RFR). RuvA specifically binds to HJ cruciform DNA, conferring on it an open structure. The RuvB hexamer acts as an ATP-dependent pump, pulling dsDNA into and through the RuvAB complex. HJ branch migration allows RuvC to scan DNA until it finds its consensus sequence, where it cleaves and resolves the cruciform DNA. This chain is Holliday junction branch migration complex subunit RuvA, found in Campylobacter hominis (strain ATCC BAA-381 / DSM 21671 / CCUG 45161 / LMG 19568 / NCTC 13146 / CH001A).